The following is a 216-amino-acid chain: 3-isopropylmalate dehydratase small subunit 1 (216 aa).

Belongs to the LeuD family. LeuD type 1 subfamily. As to quaternary structure, heterodimer of LeuC and LeuD.

It carries out the reaction (2R,3S)-3-isopropylmalate = (2S)-2-isopropylmalate. It functions in the pathway amino-acid biosynthesis; L-leucine biosynthesis; L-leucine from 3-methyl-2-oxobutanoate: step 2/4. Its function is as follows. Catalyzes the isomerization between 2-isopropylmalate and 3-isopropylmalate, via the formation of 2-isopropylmaleate. The protein is 3-isopropylmalate dehydratase small subunit 1 of Bordetella bronchiseptica (strain ATCC BAA-588 / NCTC 13252 / RB50) (Alcaligenes bronchisepticus).